The primary structure comprises 118 residues: Protein TusC (118 aa).

It belongs to the DsrF/TusC family. As to quaternary structure, heterohexamer, formed by a dimer of trimers. The hexameric TusBCD complex contains 2 copies each of TusB, TusC and TusD. The TusBCD complex interacts with TusE.

It localises to the cytoplasm. Part of a sulfur-relay system required for 2-thiolation of 5-methylaminomethyl-2-thiouridine (mnm(5)s(2)U) at tRNA wobble positions. In Salmonella typhi, this protein is Protein TusC.